We begin with the raw amino-acid sequence, 158 residues long: MQGYLSAWLVKHGLIHRSLGFDYQGIETFQIKSEDWHSIAVILYVYGYNYLRSQCAYDVAPGGLLASVYHLTRIKYGVDQPEEVCIKVFATRRDPRIPSVFCVWKSVDFQERESYDMLGISYDNHPRLKRILMPDSWIGWPLRKDYIAPNFYEIQDAH.

This sequence belongs to the complex I 30 kDa subunit family. As to quaternary structure, NDH is composed of at least 16 different subunits, 5 of which are encoded in the nucleus.

Its subcellular location is the plastid. It localises to the chloroplast thylakoid membrane. It carries out the reaction a plastoquinone + NADH + (n+1) H(+)(in) = a plastoquinol + NAD(+) + n H(+)(out). It catalyses the reaction a plastoquinone + NADPH + (n+1) H(+)(in) = a plastoquinol + NADP(+) + n H(+)(out). Functionally, NDH shuttles electrons from NAD(P)H:plastoquinone, via FMN and iron-sulfur (Fe-S) centers, to quinones in the photosynthetic chain and possibly in a chloroplast respiratory chain. The immediate electron acceptor for the enzyme in this species is believed to be plastoquinone. Couples the redox reaction to proton translocation, and thus conserves the redox energy in a proton gradient. This chain is NAD(P)H-quinone oxidoreductase subunit J, chloroplastic, found in Trachelium caeruleum (Blue throatwort).